The chain runs to 209 residues: MARYTGADCKRCRREKTKLFLKGSKCDTPKCPIEIRPYPPGEHGRGRTKDSEYLLQKREKQKCARIYGILEKQFRGYYDEANRRAGKTGDELLKILESRLDNVVYRGGFAPSRDAARQAVRHGHVQVNGRKVDIPSYRISENDIVEIAPKARELTPFIVARETAGQGRAVPAWLESIPSQMRILVHSLPARQVIDTQVQEQLIVELYSK.

The region spanning 98–164 is the S4 RNA-binding domain; that stretch reads SRLDNVVYRG…TPFIVARETA (67 aa).

This sequence belongs to the universal ribosomal protein uS4 family. As to quaternary structure, part of the 30S ribosomal subunit. Contacts protein S5. The interaction surface between S4 and S5 is involved in control of translational fidelity.

One of the primary rRNA binding proteins, it binds directly to 16S rRNA where it nucleates assembly of the body of the 30S subunit. Its function is as follows. With S5 and S12 plays an important role in translational accuracy. This is Small ribosomal subunit protein uS4 from Frankia alni (strain DSM 45986 / CECT 9034 / ACN14a).